The primary structure comprises 113 residues: Putative membrane protein insertion efficiency factor (113 aa).

The protein belongs to the UPF0161 family.

The protein localises to the cell inner membrane. Functionally, could be involved in insertion of integral membrane proteins into the membrane. This Campylobacter jejuni subsp. jejuni serotype O:23/36 (strain 81-176) protein is Putative membrane protein insertion efficiency factor.